The primary structure comprises 72 residues: Sperm protein associated with the nucleus on the X chromosome N1 (72 aa).

The disordered stretch occupies residues 1–40; it reads MEKPTSSTNGEKRKSPCDSNSKNDEMQETPNRDLVLEPSL. Basic and acidic residues predominate over residues 10–35; sequence GEKRKSPCDSNSKNDEMQETPNRDLV.

The protein belongs to the SPAN-X family.

In Pan troglodytes (Chimpanzee), this protein is Sperm protein associated with the nucleus on the X chromosome N1 (SPANXN1).